A 642-amino-acid polypeptide reads, in one-letter code: Threonine--tRNA ligase (642 aa).

A TGS domain is found at 1-61 (MPIITLPDGS…EADASLAIIT (61 aa)). The segment at 243–534 (DHRKIGKQLD…LTEEYAGLFP (292 aa)) is catalytic. Zn(2+) contacts are provided by Cys-334, His-385, and His-511.

This sequence belongs to the class-II aminoacyl-tRNA synthetase family. In terms of assembly, homodimer. It depends on Zn(2+) as a cofactor.

It is found in the cytoplasm. It catalyses the reaction tRNA(Thr) + L-threonine + ATP = L-threonyl-tRNA(Thr) + AMP + diphosphate + H(+). In terms of biological role, catalyzes the attachment of threonine to tRNA(Thr) in a two-step reaction: L-threonine is first activated by ATP to form Thr-AMP and then transferred to the acceptor end of tRNA(Thr). Also edits incorrectly charged L-seryl-tRNA(Thr). The protein is Threonine--tRNA ligase of Aeromonas hydrophila subsp. hydrophila (strain ATCC 7966 / DSM 30187 / BCRC 13018 / CCUG 14551 / JCM 1027 / KCTC 2358 / NCIMB 9240 / NCTC 8049).